A 403-amino-acid polypeptide reads, in one-letter code: Semaphorin-like protein A39 (403 aa).

An N-terminal signal peptide occupies residues Met1–Gly14. Residues Ile15–Met403 enclose the Sema domain.

It belongs to the semaphorin family. Interacts with host VESPR.

The protein resides in the secreted. In terms of biological role, acts as a semaphorin-like protein and binds to host plexin C1 receptor. May alter the movement of host plexin C1-expressing cells including dendritic cells, monocytes, or granulocytes in the proximity of infected cells. May also regulate host cell cytoskeleton of neighboring cells to improve viral infection. This is Semaphorin-like protein A39 from Homo sapiens (Human).